The following is a 346-amino-acid chain: N-acetyl-gamma-glutamyl-phosphate reductase (346 aa).

Residue Cys149 is part of the active site.

This sequence belongs to the NAGSA dehydrogenase family. Type 1 subfamily.

Its subcellular location is the cytoplasm. It carries out the reaction N-acetyl-L-glutamate 5-semialdehyde + phosphate + NADP(+) = N-acetyl-L-glutamyl 5-phosphate + NADPH + H(+). The protein operates within amino-acid biosynthesis; L-arginine biosynthesis; N(2)-acetyl-L-ornithine from L-glutamate: step 3/4. Functionally, catalyzes the NADPH-dependent reduction of N-acetyl-5-glutamyl phosphate to yield N-acetyl-L-glutamate 5-semialdehyde. This Saccharophagus degradans (strain 2-40 / ATCC 43961 / DSM 17024) protein is N-acetyl-gamma-glutamyl-phosphate reductase.